The primary structure comprises 274 residues: MRKVAIYGKGGIGKSTTTQNTVAGLAEMGKKVMVVGCDPKADSTRLLLGGLQQKTVLDTLREEGEEVELEDIIKEGYRNTRCTESGGPEPGVGCAGRGIITSVNLLEQLGAYDEEWDLDYVFYDVLGDVVCGGFAMPIRDGKAEEIYIVCSGEMMAMYAANNICKGILKYADAGGVRLGGLICNSRKVDNEREMIEELARKIGTQMIHFVPRDNFVQRAEINRKTVIDYDPTHGQADEYRALARKIDENEMFVIPKPLEIEELESLLIEFGIAN.

8–15 (GKGGIGKS) provides a ligand contact to ATP. Cys94 provides a ligand contact to [4Fe-4S] cluster. ADP-ribosylarginine; by dinitrogenase reductase ADP-ribosyltransferase is present on Arg97. A [4Fe-4S] cluster-binding site is contributed by Cys131.

It belongs to the NifH/BchL/ChlL family. As to quaternary structure, homodimer. Requires [4Fe-4S] cluster as cofactor. The reversible ADP-ribosylation of Arg-97 inactivates the nitrogenase reductase and regulates nitrogenase activity.

The catalysed reaction is N2 + 8 reduced [2Fe-2S]-[ferredoxin] + 16 ATP + 16 H2O = H2 + 8 oxidized [2Fe-2S]-[ferredoxin] + 2 NH4(+) + 16 ADP + 16 phosphate + 6 H(+). Its function is as follows. The key enzymatic reactions in nitrogen fixation are catalyzed by the nitrogenase complex, which has 2 components: the iron protein and the molybdenum-iron protein. The chain is Nitrogenase iron protein from Chlorobium luteolum (strain DSM 273 / BCRC 81028 / 2530) (Pelodictyon luteolum).